Here is a 444-residue protein sequence, read N- to C-terminus: Gamma-glutamyl phosphate reductase (444 aa).

The protein belongs to the gamma-glutamyl phosphate reductase family.

It is found in the cytoplasm. It carries out the reaction L-glutamate 5-semialdehyde + phosphate + NADP(+) = L-glutamyl 5-phosphate + NADPH + H(+). It participates in amino-acid biosynthesis; L-proline biosynthesis; L-glutamate 5-semialdehyde from L-glutamate: step 2/2. In terms of biological role, catalyzes the NADPH-dependent reduction of L-glutamate 5-phosphate into L-glutamate 5-semialdehyde and phosphate. The product spontaneously undergoes cyclization to form 1-pyrroline-5-carboxylate. The sequence is that of Gamma-glutamyl phosphate reductase from Albidiferax ferrireducens (strain ATCC BAA-621 / DSM 15236 / T118) (Rhodoferax ferrireducens).